A 182-amino-acid polypeptide reads, in one-letter code: Adenine phosphoribosyltransferase (182 aa).

This sequence belongs to the purine/pyrimidine phosphoribosyltransferase family. Homodimer.

Its subcellular location is the cytoplasm. The catalysed reaction is AMP + diphosphate = 5-phospho-alpha-D-ribose 1-diphosphate + adenine. It functions in the pathway purine metabolism; AMP biosynthesis via salvage pathway; AMP from adenine: step 1/1. Functionally, catalyzes a salvage reaction resulting in the formation of AMP, that is energically less costly than de novo synthesis. The chain is Adenine phosphoribosyltransferase from Pseudomonas fluorescens (strain SBW25).